Consider the following 333-residue polypeptide: MRTIAIDAMGGENAPEAIVKAVLKAKNEMPETKFLLFGDKEQLRELIPADQINDQLGVVATTETIADEDEPVKAIRRKKDSSMVVAANFVKEGKADALLSLGNTGALLACGIFIIGRIKGIVRPGLMPTLPVQNSDDGFNMVDVGANAKSKPEYLLQWAEMASYYAQKIRGIDNPRIALLNNGAESDKGDDVHQKAYELLKDSDLNFVGNIEGNELLLGNADVVVTDGFTGNAVLKNIEGTSSVILHLLKDSLLNGNLMTKMGALMVKGSLASLKSKFDTAKYGGAVLLGVNAPVVKTHGRSNERPIYYTLKQVDKMIKEKLVEDFRDEFSEK.

The protein belongs to the PlsX family. In terms of assembly, homodimer. Probably interacts with PlsY.

Its subcellular location is the cytoplasm. It carries out the reaction a fatty acyl-[ACP] + phosphate = an acyl phosphate + holo-[ACP]. Its pathway is lipid metabolism; phospholipid metabolism. Functionally, catalyzes the reversible formation of acyl-phosphate (acyl-PO(4)) from acyl-[acyl-carrier-protein] (acyl-ACP). This enzyme utilizes acyl-ACP as fatty acyl donor, but not acyl-CoA. This is Phosphate acyltransferase from Lactobacillus acidophilus (strain ATCC 700396 / NCK56 / N2 / NCFM).